The sequence spans 179 residues: Pyridoxal 5'-phosphate synthase subunit PdxT (179 aa).

48 to 50 (GES) provides a ligand contact to L-glutamine. Cys-79 acts as the Nucleophile in catalysis. L-glutamine-binding positions include Arg-101 and 127-128 (IR). Active-site charge relay system residues include His-163 and Glu-165.

Belongs to the glutaminase PdxT/SNO family. In the presence of PdxS, forms a dodecamer of heterodimers. Only shows activity in the heterodimer.

The catalysed reaction is aldehydo-D-ribose 5-phosphate + D-glyceraldehyde 3-phosphate + L-glutamine = pyridoxal 5'-phosphate + L-glutamate + phosphate + 3 H2O + H(+). It catalyses the reaction L-glutamine + H2O = L-glutamate + NH4(+). The protein operates within cofactor biosynthesis; pyridoxal 5'-phosphate biosynthesis. Its function is as follows. Catalyzes the hydrolysis of glutamine to glutamate and ammonia as part of the biosynthesis of pyridoxal 5'-phosphate. The resulting ammonia molecule is channeled to the active site of PdxS. In Francisella tularensis subsp. tularensis (strain FSC 198), this protein is Pyridoxal 5'-phosphate synthase subunit PdxT.